A 500-amino-acid chain; its full sequence is NAD(P)H-quinone oxidoreductase chain 4, chloroplastic (500 aa).

A run of 14 helical transmembrane segments spans residues 4 to 24, 37 to 57, 87 to 107, 111 to 131, 134 to 154, 167 to 187, 208 to 228, 242 to 262, 272 to 292, 305 to 325, 330 to 350, 386 to 406, 416 to 436, and 462 to 482; these read FPWLTIIVVFPILTGSLIFLL, LCICILELLLTTYTFCYHFQL, IGPILLTGFITTLATLAAWPV, AQLFHFLMLAMYSGQIGSFSS, LLLFFLMWEFELIPVYLLLSM, FILYTAGGSIFLLIGVLGIGL, ALEVIFYVGFLIAFAVKLPII, HYSTCMLLAGILLKMGAYGLV, AHCLFSPGLIIVGAIQIIYAA, IAYSSISHMGFIIIGIGSLSD, GAILQIISHGFIGAALFFLAG, LALPGLSGFVAELLVFFGIIT, ILIAFLMAIGMILTPIYSLSM, and LFVSISLLLPIIGIGIYPDFV.

Belongs to the complex I subunit 4 family.

The protein resides in the plastid. It is found in the chloroplast thylakoid membrane. It carries out the reaction a plastoquinone + NADH + (n+1) H(+)(in) = a plastoquinol + NAD(+) + n H(+)(out). The catalysed reaction is a plastoquinone + NADPH + (n+1) H(+)(in) = a plastoquinol + NADP(+) + n H(+)(out). This is NAD(P)H-quinone oxidoreductase chain 4, chloroplastic from Oenothera parviflora (Small-flowered evening primrose).